A 458-amino-acid polypeptide reads, in one-letter code: Transmembrane protein 135 (458 aa).

6 helical membrane passes run 68-88 (ILQS…FFCI), 96-116 (FYLW…AILV), 149-169 (TLRN…MFFF), 298-318 (FQLG…SCFL), 331-351 (IIAG…TISM), and 380-400 (IIYS…VQTL).

This sequence belongs to the TMEM135 family.

It is found in the mitochondrion membrane. Its subcellular location is the peroxisome membrane. Involved in mitochondrial metabolism by regulating the balance between mitochondrial fusion and fission. May act as a regulator of mitochondrial fission that promotes DNM1L-dependent fission through activation of DNM1L. May be involved in peroxisome organization. The sequence is that of Transmembrane protein 135 from Bos taurus (Bovine).